The primary structure comprises 483 residues: tRNA sulfurtransferase (483 aa).

Positions 62–166 constitute a THUMP domain; sequence PEICDALTRI…QDKLILVKAR (105 aa). ATP is bound by residues 184–185, lysine 266, glycine 288, and glutamine 297; that span reads LI. A disulfide bridge links cysteine 345 with cysteine 457. Residues 405–483 form the Rhodanese domain; that stretch reads LADTDVLLDI…GYTNVKVYRP (79 aa). Catalysis depends on cysteine 457, which acts as the Cysteine persulfide intermediate.

The protein belongs to the ThiI family.

Its subcellular location is the cytoplasm. The catalysed reaction is [ThiI sulfur-carrier protein]-S-sulfanyl-L-cysteine + a uridine in tRNA + 2 reduced [2Fe-2S]-[ferredoxin] + ATP + H(+) = [ThiI sulfur-carrier protein]-L-cysteine + a 4-thiouridine in tRNA + 2 oxidized [2Fe-2S]-[ferredoxin] + AMP + diphosphate. It catalyses the reaction [ThiS sulfur-carrier protein]-C-terminal Gly-Gly-AMP + S-sulfanyl-L-cysteinyl-[cysteine desulfurase] + AH2 = [ThiS sulfur-carrier protein]-C-terminal-Gly-aminoethanethioate + L-cysteinyl-[cysteine desulfurase] + A + AMP + 2 H(+). It participates in cofactor biosynthesis; thiamine diphosphate biosynthesis. Catalyzes the ATP-dependent transfer of a sulfur to tRNA to produce 4-thiouridine in position 8 of tRNAs, which functions as a near-UV photosensor. Also catalyzes the transfer of sulfur to the sulfur carrier protein ThiS, forming ThiS-thiocarboxylate. This is a step in the synthesis of thiazole, in the thiamine biosynthesis pathway. The sulfur is donated as persulfide by IscS. The sequence is that of tRNA sulfurtransferase from Yersinia pseudotuberculosis serotype IB (strain PB1/+).